We begin with the raw amino-acid sequence, 358 residues long: MNATLRIRNRPVAESTYTSLRGAKAEVVRVEREEREIHPKPPFETGTMLQAATRRLRLSSERVMQLAQDLFEGGLITYHRTDSTRVSEEGKRVARDYIRANFDPEDYNPRTWEPEAEHVEGAHECIRPTRPADAEELRTMVREGAIQTTVTLTSHHLRLYDLVFRRFVASQMKPAKVLYQEAVLEVEVKGVPVAELELSGVLEIVEPGFTKVLTEYDLPAYGIRETPELEEGDRLEIGDVEVLERHEEYPYDQSELVEDMRERGLGRPSTYAQIVEKLFRRGYVYEVPQRRWIFPTTRGEAVYEYLSTHYERFVSEETTRDLEERMDAVALGKAEYQEEMEKLYLELERVVEMPDPEP.

In terms of domain architecture, Topo IA-type catalytic spans M1–V351. The O-(5'-phospho-DNA)-tyrosine intermediate role is filled by Y78.

It belongs to the type IA topoisomerase family. As to quaternary structure, heterodimer of an RgyrA and RgyrB subunit. The topoisomerase domain is shared between the two subunits. Mg(2+) is required as a cofactor.

The protein resides in the cytoplasm. Its function is as follows. Modifies the topological state of DNA by introducing positive supercoils in an ATP-dependent process; dATP also allows positive supercoiling. Increases the linking number in steps of +1. Only this subunit binds DNA, in isolation it does not hydrolyze ATP. Hydrolyzes ATP only in the presence of DNA. Transiently cleaves a single DNA strand and remains covalently bound to the 5' DNA end probably through a tyrosine residue. It changes linking number in steps of one, and nicks DNA preferentially at 5'-CNNN | 3'-sites with a strong preference for 4 pyrimidine residues. There are about 1000 heterodimers per cell. May be involved in rewinding the DNA strands in the regions of the chromosome that have opened up to allow transcription or replication. In terms of biological role, reverse gyrase activity is reconstituted after incubation at 80 degrees Celsius for 5 minutes, positive supercoiling requires ATP and Mg(2+). In the presence of ATP it binds and nicks substrate but does not make closed product. In Methanopyrus kandleri (strain AV19 / DSM 6324 / JCM 9639 / NBRC 100938), this protein is Reverse gyrase subunit A.